The following is a 417-amino-acid chain: Phosphatidylcholine:ceramide cholinephosphotransferase 1 (417 aa).

The 64-residue stretch at 11 to 74 folds into the SAM domain; it reads WSPEEVTNWL…LHMIETLKMA (64 aa). 5 consecutive transmembrane segments (helical) span residues 140–160, 188–208, 219–239, 280–300, and 308–328; these read FLAFIYALFCFIFTTVTISVV, FSICEINGMILVGLWLVQWLL, FFCIVCTLYLYRCITMYVTTL, MCGDYLYSGHTVILTLTYLFI, and LWWYHWLCWTLSMVGMFCILL. His-289 is an active-site residue. The Cytoplasmic portion of the chain corresponds to 329 to 417; it reads AHDHYTVDVV…VKYSRLVNDT (89 aa). Catalysis depends on residues His-332 and Asp-336.

The protein belongs to the sphingomyelin synthase family.

Its subcellular location is the golgi apparatus membrane. The enzyme catalyses an N-acylsphing-4-enine + a 1,2-diacyl-sn-glycero-3-phosphocholine = a sphingomyelin + a 1,2-diacyl-sn-glycerol. It catalyses the reaction an N-acylsphing-4-enine + a 1,2-diacyl-sn-glycero-3-phosphoethanolamine = an N-acylsphing-4-enine 1-phosphoethanolamine + a 1,2-diacyl-sn-glycerol. In terms of biological role, major sphingomyelin synthase at the Golgi apparatus. Catalyzes the reversible transfer of phosphocholine moiety in sphingomyelin biosynthesis: in the forward reaction transfers phosphocholine head group of phosphatidylcholine (PC) on to ceramide (CER) to form ceramide phosphocholine (sphingomyelin, SM) and diacylglycerol (DAG) as by-product, and in the reverse reaction transfers phosphocholine from SM to DAG to form PC and CER. The direction of the reaction depends on the levels of CER and DAG in Golgi membranes. Converts the newly synthesized CER, that is transported from the endoplasmic reticulum to the trans-Golgi by the Cer transport protein (CERT), to SM. Can form a heteromeric complex with glucosylceramide synthase (GCS) increasing SMS activity and reducing glucosylceramide synthesis, a critical mechanism that controls the metabolic fate of CER in the Golgi. Does not use free phosphorylcholine or CDP-choline as donor. Can also transfer phosphoethanolamine head group of phosphatidylethanolamine (PE) on to CER to form ceramide phosphoethanolamine (CPE). Regulates receptor-mediated signal transduction via mitogenic DAG and proapoptotic CER, as well as via SM, a structural component of membrane rafts that serve as platforms for signal transduction and protein sorting. Plays a role in secretory transport via regulation of DAG pool at the Golgi apparatus and its downstream effects on PRKD1. This is Phosphatidylcholine:ceramide cholinephosphotransferase 1 (SGMS1) from Gallus gallus (Chicken).